The chain runs to 234 residues: GTP-binding protein YPT52 (234 aa).

GTP-binding positions include 10–17 (GDSSVGKS), 66–70 (DTAGQ), and 111–114 (NKVG). Disordered stretches follow at residues 131-151 (QETPSTETSPDSNEGGDEEQK) and 206-234 (NRQIGGGNNGQVDINLQRPSTNDPTSCCS). Residues 132–142 (ETPSTETSPDS) are compositionally biased toward polar residues. Phosphoserine occurs at positions 139 and 142. Lysine 151 participates in a covalent cross-link: Glycyl lysine isopeptide (Lys-Gly) (interchain with G-Cter in ubiquitin). A compositionally biased stretch (polar residues) spans 217 to 234 (VDINLQRPSTNDPTSCCS). 2 S-geranylgeranyl cysteine lipidation sites follow: cysteine 232 and cysteine 233.

The protein belongs to the small GTPase superfamily. Rab family. In terms of assembly, interacts with ROY1, YIF1, YIP3, YIP4 and YIP5.

The protein resides in the cell membrane. It localises to the endoplasmic reticulum. Required for transport in the endocytic pathway and for correct sorting of the vacuolar hydrolases suggesting a possible intersection of the endocytic with the vacuolar sorting pathway. May be involved in recruiting the MON1-CCZ1 complex to membranes enriched in phosphatidylinositol 3-phosphate (PtdIns[3]P) or other charged lipids, leading to recruitment of YPT7. The polypeptide is GTP-binding protein YPT52 (YPT52) (Saccharomyces cerevisiae (strain ATCC 204508 / S288c) (Baker's yeast)).